We begin with the raw amino-acid sequence, 494 residues long: BUB3-interacting and GLEBS motif-containing protein ZNF207 (494 aa).

The tract at residues 1-92 (MGRKKKKQLK…EGIPEKDMDE (92 aa)) is microtubule-binding region. 2 C2H2-type zinc fingers span residues 11-34 (PWCW…KAKH) and 35-58 (FKCH…MQVH). Residues 100 to 111 (KTQESQKKKQQD) are compositionally biased toward basic and acidic residues. Disordered stretches follow at residues 100–161 (KTQE…PGIP), 250–377 (NRPP…SATS), and 455–494 (LPGA…GGRY). Positions 112–121 (DSDEYDDDDS) are enriched in acidic residues. A compositionally biased stretch (polar residues) spans 127–136 (FQPQPVQPQQ). Pro residues predominate over residues 142–161 (MAQPGLPPVPGAPGMPPGIP). Residues 283–300 (SSSTASSNSESLSASSKA) show a composition bias toward low complexity. Polar residues predominate over residues 323 to 332 (LNSTPATSTE). A compositionally biased stretch (low complexity) spans 342 to 377 (TQSTASTTSTTNSTAAKPAASITSKPATLTTTSATS). A GLEBS region spans residues 375-407 (ATSKLIHPDEDISLEERRAQLPKYQRNLPRPGQ). Residues 463–483 (GQGPPMVPPYQGGPPRPPMGM) are compositionally biased toward pro residues.

Interacts (via GLEBS region) with BUB3.

Its subcellular location is the nucleus. The protein localises to the chromosome. It localises to the centromere. The protein resides in the kinetochore. It is found in the cytoplasm. Its subcellular location is the cytoskeleton. The protein localises to the spindle. Functionally, kinetochore- and microtubule-binding protein that plays a key role in spindle assembly. ZNF207/BuGZ is mainly composed of disordered low-complexity regions and undergoes phase transition or coacervation to form temperature-dependent liquid droplets. Coacervation promotes microtubule bundling and concentrates tubulin, promoting microtubule polymerization and assembly of spindle and spindle matrix by concentrating its building blocks. Also acts as a regulator of mitotic chromosome alignment by mediating the stability and kinetochore loading of BUB3. Mechanisms by which BUB3 is protected are unclear: according to a first report, ZNF207/BuGZ may act by blocking ubiquitination and proteasomal degradation of BUB3. According to another report, the stabilization is independent of the proteasome. The polypeptide is BUB3-interacting and GLEBS motif-containing protein ZNF207 (Pongo abelii (Sumatran orangutan)).